The primary structure comprises 212 residues: Large ribosomal subunit protein uL3 (212 aa).

Gln153 bears the N5-methylglutamine mark.

This sequence belongs to the universal ribosomal protein uL3 family. Part of the 50S ribosomal subunit. Forms a cluster with proteins L14 and L19. In terms of processing, methylated by PrmB.

Its function is as follows. One of the primary rRNA binding proteins, it binds directly near the 3'-end of the 23S rRNA, where it nucleates assembly of the 50S subunit. The chain is Large ribosomal subunit protein uL3 from Shewanella woodyi (strain ATCC 51908 / MS32).